A 378-amino-acid polypeptide reads, in one-letter code: Erythronate-4-phosphate dehydrogenase (378 aa).

S45 and T66 together coordinate substrate. Residue D146 coordinates NAD(+). R207 is a catalytic residue. D231 is an NAD(+) binding site. The active site involves E236. H253 acts as the Proton donor in catalysis. NAD(+) is bound at residue G256.

Belongs to the D-isomer specific 2-hydroxyacid dehydrogenase family. PdxB subfamily. As to quaternary structure, homodimer.

It is found in the cytoplasm. The catalysed reaction is 4-phospho-D-erythronate + NAD(+) = (R)-3-hydroxy-2-oxo-4-phosphooxybutanoate + NADH + H(+). Its pathway is cofactor biosynthesis; pyridoxine 5'-phosphate biosynthesis; pyridoxine 5'-phosphate from D-erythrose 4-phosphate: step 2/5. In terms of biological role, catalyzes the oxidation of erythronate-4-phosphate to 3-hydroxy-2-oxo-4-phosphonooxybutanoate. This Wigglesworthia glossinidia brevipalpis protein is Erythronate-4-phosphate dehydrogenase.